The primary structure comprises 195 residues: Imidazoleglycerol-phosphate dehydratase (195 aa).

The protein belongs to the imidazoleglycerol-phosphate dehydratase family.

The protein localises to the cytoplasm. The enzyme catalyses D-erythro-1-(imidazol-4-yl)glycerol 3-phosphate = 3-(imidazol-4-yl)-2-oxopropyl phosphate + H2O. It functions in the pathway amino-acid biosynthesis; L-histidine biosynthesis; L-histidine from 5-phospho-alpha-D-ribose 1-diphosphate: step 6/9. The polypeptide is Imidazoleglycerol-phosphate dehydratase (Hydrogenovibrio crunogenus (strain DSM 25203 / XCL-2) (Thiomicrospira crunogena)).